A 154-amino-acid chain; its full sequence is 6,7-dimethyl-8-ribityllumazine synthase (154 aa).

5-amino-6-(D-ribitylamino)uracil is bound by residues Phe-26, 60-62 (ALE), and 84-86 (CII). 89 to 90 (ET) contacts (2S)-2-hydroxy-3-oxobutyl phosphate. The active-site Proton donor is His-92. Position 117 (Asn-117) interacts with 5-amino-6-(D-ribitylamino)uracil. Residue Arg-131 participates in (2S)-2-hydroxy-3-oxobutyl phosphate binding.

This sequence belongs to the DMRL synthase family.

It catalyses the reaction (2S)-2-hydroxy-3-oxobutyl phosphate + 5-amino-6-(D-ribitylamino)uracil = 6,7-dimethyl-8-(1-D-ribityl)lumazine + phosphate + 2 H2O + H(+). The protein operates within cofactor biosynthesis; riboflavin biosynthesis; riboflavin from 2-hydroxy-3-oxobutyl phosphate and 5-amino-6-(D-ribitylamino)uracil: step 1/2. In terms of biological role, catalyzes the formation of 6,7-dimethyl-8-ribityllumazine by condensation of 5-amino-6-(D-ribitylamino)uracil with 3,4-dihydroxy-2-butanone 4-phosphate. This is the penultimate step in the biosynthesis of riboflavin. The sequence is that of 6,7-dimethyl-8-ribityllumazine synthase from Paracidovorax citrulli (strain AAC00-1) (Acidovorax citrulli).